We begin with the raw amino-acid sequence, 377 residues long: Anhydro-N-acetylmuramic acid kinase (377 aa).

18-25 (GTSADGID) is an ATP binding site.

Belongs to the anhydro-N-acetylmuramic acid kinase family.

The catalysed reaction is 1,6-anhydro-N-acetyl-beta-muramate + ATP + H2O = N-acetyl-D-muramate 6-phosphate + ADP + H(+). It participates in amino-sugar metabolism; 1,6-anhydro-N-acetylmuramate degradation. Its pathway is cell wall biogenesis; peptidoglycan recycling. In terms of biological role, catalyzes the specific phosphorylation of 1,6-anhydro-N-acetylmuramic acid (anhMurNAc) with the simultaneous cleavage of the 1,6-anhydro ring, generating MurNAc-6-P. Is required for the utilization of anhMurNAc either imported from the medium or derived from its own cell wall murein, and thus plays a role in cell wall recycling. This is Anhydro-N-acetylmuramic acid kinase from Xanthomonas campestris pv. campestris (strain 8004).